The primary structure comprises 465 residues: Iron-sulfur cluster assembly SufBD family protein SE_0610 (465 aa).

It belongs to the iron-sulfur cluster assembly SufBD family.

This chain is Iron-sulfur cluster assembly SufBD family protein SE_0610, found in Staphylococcus epidermidis (strain ATCC 12228 / FDA PCI 1200).